Here is a 274-residue protein sequence, read N- to C-terminus: 2,3,4,5-tetrahydropyridine-2,6-dicarboxylate N-succinyltransferase (274 aa).

Substrate-binding residues include Arg106 and Asp143.

This sequence belongs to the transferase hexapeptide repeat family. As to quaternary structure, homotrimer.

The protein localises to the cytoplasm. It catalyses the reaction (S)-2,3,4,5-tetrahydrodipicolinate + succinyl-CoA + H2O = (S)-2-succinylamino-6-oxoheptanedioate + CoA. The protein operates within amino-acid biosynthesis; L-lysine biosynthesis via DAP pathway; LL-2,6-diaminopimelate from (S)-tetrahydrodipicolinate (succinylase route): step 1/3. The chain is 2,3,4,5-tetrahydropyridine-2,6-dicarboxylate N-succinyltransferase from Rickettsia akari (strain Hartford).